We begin with the raw amino-acid sequence, 655 residues long: Tumor necrosis factor receptor superfamily member 21 (655 aa).

A signal peptide spans 1–41 (MGTRASSITALASCSRTAGQVGATMVAGSLLLLGFLSTITA). Topologically, residues 42–349 (QPEQKTLSLP…AHKHFDINEH (308 aa)) are extracellular. 4 TNFR-Cys repeats span residues 50–88 (LPGT…LRVC), 90–131 (SCPA…DREC), 133–167 (CPPG…EDVR), and 170–211 (QCAR…DNVC). Disulfide bonds link Cys67–Cys80, Cys70–Cys88, Cys91–Cys106, Cys109–Cys123, Cys113–Cys131, Cys133–Cys144, Cys150–Cys168, Cys171–Cys186, and Cys192–Cys211. Asn82 carries N-linked (GlcNAc...) asparagine glycosylation. Asn141 is a glycosylation site (N-linked (GlcNAc...) asparagine). Disordered stretches follow at residues 222 to 305 (PPSS…QAPH) and 318 to 339 (EATG…PRQN). Composition is skewed to polar residues over residues 241–262 (VPSS…TASV) and 276–302 (PDNT…THQQ). 4 N-linked (GlcNAc...) asparagine glycosylation sites follow: Asn252, Asn257, Asn278, and Asn289. Residues 330 to 339 (APKRGHPRQN) are compositionally biased toward basic residues. A helical membrane pass occupies residues 350–370 (LPWMIVLFLLLVLVLIVVCSI). Residue Cys368 is the site of S-palmitoyl cysteine attachment. Over 371-655 (RKSSRTLKKG…SVYSHLPDLL (285 aa)) the chain is Cytoplasmic. The region spanning 415-498 (GIDILKLVAA…DVVEKIRGLM (84 aa)) is the Death domain.

Associates with TRADD. Interacts with NGFR. Interacts with CASP8. In terms of processing, oxidized in response to reactive oxygen species (ROS), leading to endocytosis. In terms of tissue distribution, detected in spleen B-cells (at protein level). Ubiquitous. Highly expressed in adult spleen, thymus, testis, prostate, ovary, small intestine, colon, brain, lung and kidney, and in fetal brain, liver and lung. Detected at lower levels in adult peripheral blood leukocytes, lung, and in fetal muscle, heart, kidney, small intestine and skin. Detected in T-cells, B-cells and monocytes. In T-cells expression is highest in Th0 cells, intermediate in Th2 cells and lower in Th1 cells. Expressed at low levels in proliferating progenitors in the spinal cord, but is highly expressed by differentiating neurons within the spinal cord and adjacent dorsal root ganglia.

The protein localises to the cell membrane. Its function is as follows. Promotes apoptosis, possibly via a pathway that involves the activation of NF-kappa-B. Can also promote apoptosis mediated by BAX and by the release of cytochrome c from the mitochondria into the cytoplasm. Trophic-factor deprivation triggers the cleavage of surface APP by beta-secretase to release sAPP-beta which is further cleaved to release an N-terminal fragment of APP (N-APP). Negatively regulates oligodendrocyte survival, maturation and myelination. Plays a role in signaling cascades triggered by stimulation of T-cell receptors, in the adaptive immune response and in the regulation of T-cell differentiation and proliferation. Negatively regulates T-cell responses and the release of cytokines such as IL4, IL5, IL10, IL13 and IFNG by Th2 cells. Negatively regulates the production of IgG, IgM and IgM in response to antigens. May inhibit the activation of JNK in response to T-cell stimulation. Also acts as a regulator of pyroptosis: recruits CASP8 in response to reactive oxygen species (ROS) and subsequent oxidation, leading to activation of GSDMC. This Mus musculus (Mouse) protein is Tumor necrosis factor receptor superfamily member 21 (Tnfrsf21).